The sequence spans 156 residues: MLVYQDILTGDELLSDSFPYKEIENGMLWEVEGKNPSGEEGGEDEGVDDQAVKVVDIIDTFRLQEQPSFDKKQFVMFMKRYIKQLSPKLDSENQELFKKHIESATKFLMSKLKDFQFFVGESMEGEEGSLVFAYYREGATDPTFLYLAYGLKEIKC.

Residues 1 to 156 (MLVYQDILTG…LAYGLKEIKC (156 aa)) enclose the TCTP domain.

This sequence belongs to the TCTP family. Expressed in stems, cauline leaves, minor veins of rosette leaves, roots, lateral root primordia, vascular tissues of petioles and inflorescences, base of siliques, papillae and ovules. Not detected in root meristems, anthers or seeds. Expressed in stomata, trichomes and root cortex.

The protein localises to the nucleus. It localises to the cytoplasm. Regulates proliferation. Induces whole plant regeneration when expressed in heterologous systems. Involved in root growth and lateral root development, with a probable role in cell reprogramming. The long-distance transport of TCTP RNA and/or protein in plants may have an important role in regulation of growth and development. This Arabidopsis thaliana (Mouse-ear cress) protein is Translationally controlled tumor protein 2.